A 290-amino-acid chain; its full sequence is ATP synthase gamma chain (290 aa).

Belongs to the ATPase gamma chain family. In terms of assembly, F-type ATPases have 2 components, CF(1) - the catalytic core - and CF(0) - the membrane proton channel. CF(1) has five subunits: alpha(3), beta(3), gamma(1), delta(1), epsilon(1). CF(0) has three main subunits: a, b and c.

The protein resides in the cell membrane. In terms of biological role, produces ATP from ADP in the presence of a proton gradient across the membrane. The gamma chain is believed to be important in regulating ATPase activity and the flow of protons through the CF(0) complex. This is ATP synthase gamma chain from Rubrobacter xylanophilus (strain DSM 9941 / JCM 11954 / NBRC 16129 / PRD-1).